Here is a 165-residue protein sequence, read N- to C-terminus: Nucleotide-binding protein Syncc9605_0652 (165 aa).

It belongs to the YajQ family.

Its function is as follows. Nucleotide-binding protein. In Synechococcus sp. (strain CC9605), this protein is Nucleotide-binding protein Syncc9605_0652.